A 424-amino-acid chain; its full sequence is Enolase (424 aa).

(2R)-2-phosphoglycerate is bound at residue glutamine 163. Residue glutamate 205 is the Proton donor of the active site. The Mg(2+) site is built by aspartate 242, glutamate 285, and aspartate 312. Positions 337, 366, 367, and 388 each coordinate (2R)-2-phosphoglycerate. Lysine 337 functions as the Proton acceptor in the catalytic mechanism.

Belongs to the enolase family. Requires Mg(2+) as cofactor.

The protein localises to the cytoplasm. It is found in the secreted. Its subcellular location is the cell surface. It catalyses the reaction (2R)-2-phosphoglycerate = phosphoenolpyruvate + H2O. It participates in carbohydrate degradation; glycolysis; pyruvate from D-glyceraldehyde 3-phosphate: step 4/5. Its function is as follows. Catalyzes the reversible conversion of 2-phosphoglycerate (2-PG) into phosphoenolpyruvate (PEP). It is essential for the degradation of carbohydrates via glycolysis. The sequence is that of Enolase from Roseobacter denitrificans (strain ATCC 33942 / OCh 114) (Erythrobacter sp. (strain OCh 114)).